Consider the following 247-residue polypeptide: 2,3-bisphosphoglycerate-dependent phosphoglycerate mutase (247 aa).

Substrate contacts are provided by residues 9–16 (RHGESEWN), 22–23 (TG), Arg-61, 88–91 (ERHY), Lys-99, 115–116 (RR), and 183–184 (GN). His-10 acts as the Tele-phosphohistidine intermediate in catalysis. Catalysis depends on Glu-88, which acts as the Proton donor/acceptor.

This sequence belongs to the phosphoglycerate mutase family. BPG-dependent PGAM subfamily.

It catalyses the reaction (2R)-2-phosphoglycerate = (2R)-3-phosphoglycerate. The protein operates within carbohydrate degradation; glycolysis; pyruvate from D-glyceraldehyde 3-phosphate: step 3/5. Functionally, catalyzes the interconversion of 2-phosphoglycerate and 3-phosphoglycerate. The protein is 2,3-bisphosphoglycerate-dependent phosphoglycerate mutase of Nocardioides sp. (strain ATCC BAA-499 / JS614).